A 287-amino-acid polypeptide reads, in one-letter code: Ethanolamine ammonia-lyase small subunit (287 aa).

Positions 168, 189, and 218 each coordinate adenosylcob(III)alamin.

The protein belongs to the EutC family. As to quaternary structure, the basic unit is a heterodimer which dimerizes to form tetramers. The heterotetramers trimerize; 6 large subunits form a core ring with 6 small subunits projecting outwards. Adenosylcob(III)alamin serves as cofactor.

It is found in the bacterial microcompartment. The enzyme catalyses ethanolamine = acetaldehyde + NH4(+). The protein operates within amine and polyamine degradation; ethanolamine degradation. Its function is as follows. Catalyzes the deamination of various vicinal amino-alcohols to oxo compounds. Allows this organism to utilize ethanolamine as the sole source of nitrogen and carbon in the presence of external vitamin B12. This chain is Ethanolamine ammonia-lyase small subunit, found in Pseudomonas syringae pv. tomato (strain ATCC BAA-871 / DC3000).